Reading from the N-terminus, the 461-residue chain is Porin AaxA (461 aa).

Positions 1 to 22 (MSFRSILLTALLSLSFTNTMQA) are cleaved as a signal peptide.

This sequence belongs to the OprB family.

Its subcellular location is the cell outer membrane. Its function is as follows. Facilitates L-arginine uptake, as part of the AaxABC system. The arginine uptake by the bacterium in the macrophage may be a virulence factor against the host innate immune response. In Chlamydia muridarum (strain MoPn / Nigg), this protein is Porin AaxA (aaxA).